The sequence spans 138 residues: Large ribosomal subunit protein bL17 (138 aa).

This sequence belongs to the bacterial ribosomal protein bL17 family. As to quaternary structure, part of the 50S ribosomal subunit. Contacts protein L32.

In Nitrobacter winogradskyi (strain ATCC 25391 / DSM 10237 / CIP 104748 / NCIMB 11846 / Nb-255), this protein is Large ribosomal subunit protein bL17.